The primary structure comprises 474 residues: Nuclear hormone receptor family member nhr-91 (474 aa).

Residues 50–69 form a disordered region; it reads SMTPSFSQTESPNSETDDST. A compositionally biased stretch (polar residues) spans 51–69; it reads MTPSFSQTESPNSETDDST. The nuclear receptor DNA-binding region spans 97 to 172; the sequence is SKLCSVCGDK…KGMLTEAVRE (76 aa). 2 consecutive NR C4-type zinc fingers follow at residues 100 to 120 and 136 to 155; these read CSVCGDKSTGLHYGAATCEGC and CSQDNCCEIDKQNRNRCQSC. In terms of domain architecture, NR LBD spans 215 to 474; sequence SGKKLIKELV…KNPRRLVFDE (260 aa).

This sequence belongs to the nuclear hormone receptor family.

It localises to the nucleus. In terms of biological role, orphan nuclear receptor. The sequence is that of Nuclear hormone receptor family member nhr-91 (nhr-91) from Caenorhabditis elegans.